The sequence spans 507 residues: Alkyl hydroperoxide reductase subunit F (507 aa).

207–222 (DVLIVGGGPASGSAAI) contacts FAD. Cysteine 335 and cysteine 338 are disulfide-bonded. 347–361 (DVAVIGGGNSGVEAA) serves as a coordination point for NAD(+). FAD is bound at residue 467-477 (TNVPGIFAAGD).

Belongs to the class-II pyridine nucleotide-disulfide oxidoreductase family. As to quaternary structure, homodimer. Requires FAD as cofactor.

Functionally, serves to protect the cell against DNA damage by alkyl hydroperoxides. It can use either NADH or NADPH as electron donor for direct reduction of redox dyes or of alkyl hydroperoxides when combined with the AhpC protein. The chain is Alkyl hydroperoxide reductase subunit F (ahpF) from Staphylococcus epidermidis (strain ATCC 35984 / DSM 28319 / BCRC 17069 / CCUG 31568 / BM 3577 / RP62A).